A 255-amino-acid polypeptide reads, in one-letter code: Imidazole glycerol phosphate synthase subunit HisF (255 aa).

Catalysis depends on residues Asp-11 and Asp-130.

Belongs to the HisA/HisF family. In terms of assembly, heterodimer of HisH and HisF.

Its subcellular location is the cytoplasm. The catalysed reaction is 5-[(5-phospho-1-deoxy-D-ribulos-1-ylimino)methylamino]-1-(5-phospho-beta-D-ribosyl)imidazole-4-carboxamide + L-glutamine = D-erythro-1-(imidazol-4-yl)glycerol 3-phosphate + 5-amino-1-(5-phospho-beta-D-ribosyl)imidazole-4-carboxamide + L-glutamate + H(+). It participates in amino-acid biosynthesis; L-histidine biosynthesis; L-histidine from 5-phospho-alpha-D-ribose 1-diphosphate: step 5/9. Its function is as follows. IGPS catalyzes the conversion of PRFAR and glutamine to IGP, AICAR and glutamate. The HisF subunit catalyzes the cyclization activity that produces IGP and AICAR from PRFAR using the ammonia provided by the HisH subunit. This is Imidazole glycerol phosphate synthase subunit HisF from Rhodopseudomonas palustris (strain BisA53).